The following is a 637-amino-acid chain: Neuroendocrine convertase 2 (637 aa).

The N-terminal stretch at 1-24 (MEGGCGSQWKAAGLLFCVMVFASA) is a signal peptide. A propeptide spanning residues 25–108 (ERPVFTNHFL…QQEGFDRKKR (84 aa)) is cleaved from the precursor. Residues 128–452 (QWYLFNTGQA…YGVLDAGAMV (325 aa)) enclose the Peptidase S8 domain. Residues Asp166 and His207 each act as charge relay system in the active site. Intrachain disulfides connect Cys224–Cys375 and Cys316–Cys346. A glycan (N-linked (GlcNAc...) asparagine) is linked at Asn374. Ser383 acts as the Charge relay system in catalysis. In terms of domain architecture, P/Homo B spans 460–596 (TVPERFHCVG…TLMLHGTQSA (137 aa)). Cys467 and Cys493 are joined by a disulfide. 2 N-linked (GlcNAc...) asparagine glycosylation sites follow: Asn513 and Asn523.

The protein belongs to the peptidase S8 family. Furin subfamily.

It is found in the cytoplasmic vesicle. The protein resides in the secretory vesicle. Its subcellular location is the secreted. It carries out the reaction Release of protein hormones and neuropeptides from their precursors, generally by hydrolysis of -Lys-Arg-|- bonds.. In terms of biological role, serine endopeptidase which is involved in the processing of hormone and other protein precursors at sites comprised of pairs of basic amino acid residues. Responsible for the release of glucagon from proglucagon in pancreatic A cells. This chain is Neuroendocrine convertase 2 (Pcsk2), found in Rattus norvegicus (Rat).